The following is a 149-amino-acid chain: Sec-independent protein translocase protein TatB (149 aa).

The chain crosses the membrane as a helical span at residues 1–22 (MFDGIGFMELLLIGVLGLIVLG). A compositionally biased stretch (polar residues) spans 86 to 113 (LKQAAQSVNRPYQVQDTPSAQDNQIHNP). Residues 86–149 (LKQAAQSVNR…DPRSNTKANG (64 aa)) are disordered. The segment covering 114 to 135 (ASQTVSTEASSTSASSAPKSES) has biased composition (low complexity).

The protein belongs to the TatB family. In terms of assembly, the Tat system comprises two distinct complexes: a TatABC complex, containing multiple copies of TatA, TatB and TatC subunits, and a separate TatA complex, containing only TatA subunits. Substrates initially bind to the TatABC complex, which probably triggers association of the separate TatA complex to form the active translocon.

It is found in the cell inner membrane. In terms of biological role, part of the twin-arginine translocation (Tat) system that transports large folded proteins containing a characteristic twin-arginine motif in their signal peptide across membranes. Together with TatC, TatB is part of a receptor directly interacting with Tat signal peptides. TatB may form an oligomeric binding site that transiently accommodates folded Tat precursor proteins before their translocation. The chain is Sec-independent protein translocase protein TatB from Shewanella oneidensis (strain ATCC 700550 / JCM 31522 / CIP 106686 / LMG 19005 / NCIMB 14063 / MR-1).